The chain runs to 207 residues: Small ribosomal subunit protein uS4 (207 aa).

In terms of domain architecture, S4 RNA-binding spans 96–156 (SRLDNTVYRM…KKSHKQSRIR (61 aa)).

The protein belongs to the universal ribosomal protein uS4 family. In terms of assembly, part of the 30S ribosomal subunit. Contacts protein S5. The interaction surface between S4 and S5 is involved in control of translational fidelity.

Its function is as follows. One of the primary rRNA binding proteins, it binds directly to 16S rRNA where it nucleates assembly of the body of the 30S subunit. Functionally, with S5 and S12 plays an important role in translational accuracy. This chain is Small ribosomal subunit protein uS4, found in Blochmanniella pennsylvanica (strain BPEN).